Consider the following 332-residue polypeptide: Galectin-4 (332 aa).

Galectin domains are found at residues Tyr19–Ile150 and Phe203–Ile332. Trp265 to Lys271 contributes to the a beta-D-galactoside binding site. Position 267 is a phosphoserine (Ser267).

In terms of assembly, monomer.

In terms of biological role, galectin that binds lactose and a related range of sugars. May be involved in the assembly of adherens junctions. The protein is Galectin-4 (LGALS4) of Bos taurus (Bovine).